We begin with the raw amino-acid sequence, 650 residues long: Methionine--tRNA ligase (650 aa).

A 'HIGH' region motif is present at residues 11–21; that stretch reads YYVNDIPHIGH. Zn(2+)-binding residues include C126, C129, C147, and C150. Residues 301–305 carry the 'KMSKS' region motif; that stretch reads KMSKS. K304 contributes to the ATP binding site. The tract at residues 513-535 is disordered; sequence EKTEKAGEASPEKNEKEKKDAKE. The tRNA-binding domain maps to 549-650; that stretch reads DFKKVEIKVG…REKIAGSLIS (102 aa).

It belongs to the class-I aminoacyl-tRNA synthetase family. MetG type 2A subfamily. As to quaternary structure, homodimer. The cofactor is Zn(2+).

The protein resides in the cytoplasm. The enzyme catalyses tRNA(Met) + L-methionine + ATP = L-methionyl-tRNA(Met) + AMP + diphosphate. Its function is as follows. Is required not only for elongation of protein synthesis but also for the initiation of all mRNA translation through initiator tRNA(fMet) aminoacylation. This is Methionine--tRNA ligase (metG) from Helicobacter pylori (strain ATCC 700392 / 26695) (Campylobacter pylori).